We begin with the raw amino-acid sequence, 314 residues long: D-alanine--D-alanine ligase (314 aa).

An ATP-grasp domain is found at 115-310 (KQVWQSVGLV…FNELVLEILA (196 aa)). Residue 141 to 196 (LDSLGGQGFVKPAHEGSSIGMSVVSTAQELKAAYEKAAHYDAKVLVERRIVGREFT) participates in ATP binding. Mg(2+)-binding residues include Asp264, Glu277, and Asn279.

This sequence belongs to the D-alanine--D-alanine ligase family. The cofactor is Mg(2+). Mn(2+) serves as cofactor.

It is found in the cytoplasm. The enzyme catalyses 2 D-alanine + ATP = D-alanyl-D-alanine + ADP + phosphate + H(+). It functions in the pathway cell wall biogenesis; peptidoglycan biosynthesis. Its function is as follows. Cell wall formation. This is D-alanine--D-alanine ligase from Saccharophagus degradans (strain 2-40 / ATCC 43961 / DSM 17024).